The chain runs to 621 residues: 1-deoxy-D-xylulose-5-phosphate synthase (621 aa).

Thiamine diphosphate-binding positions include His80 and 121–123 (GHS). Asp152 is a Mg(2+) binding site. Thiamine diphosphate is bound by residues 153 to 154 (GA), Asn181, Tyr288, and Glu370. Asn181 is a binding site for Mg(2+).

The protein belongs to the transketolase family. DXPS subfamily. In terms of assembly, homodimer. Mg(2+) serves as cofactor. Thiamine diphosphate is required as a cofactor.

The catalysed reaction is D-glyceraldehyde 3-phosphate + pyruvate + H(+) = 1-deoxy-D-xylulose 5-phosphate + CO2. The protein operates within metabolic intermediate biosynthesis; 1-deoxy-D-xylulose 5-phosphate biosynthesis; 1-deoxy-D-xylulose 5-phosphate from D-glyceraldehyde 3-phosphate and pyruvate: step 1/1. Catalyzes the acyloin condensation reaction between C atoms 2 and 3 of pyruvate and glyceraldehyde 3-phosphate to yield 1-deoxy-D-xylulose-5-phosphate (DXP). This is 1-deoxy-D-xylulose-5-phosphate synthase from Vibrio parahaemolyticus serotype O3:K6 (strain RIMD 2210633).